The primary structure comprises 988 residues: RecQ-like DNA helicase blm-1 (988 aa).

Residues 46–119 (CEEREEEYID…QFPSRPQKRL (74 aa)) are disordered. Repeat copies occupy residues 121-129 (DPPIVDLDE) and 130-138 (EPPIVDLDD). A 2 X 9 AA tandem repeats of [DE]-P-P-I-V-D-L-D-[ED] region spans residues 121–138 (DPPIVDLDEEPPIVDLDD). A disordered region spans residues 148 to 185 (TSEEVVSGDIAPEEEEEEGHDSFDDFESVPAQPPSKNT). The segment covering 158–174 (APEEEEEEGHDSFDDFE) has biased composition (acidic residues). Residues 248–252 (FRHRQ) and 272–276 (GAGKS) each bind ATP. Residues 256–433 (ILSTLMGHDT…RDHLKMQNSK (178 aa)) enclose the Helicase ATP-binding domain. The short motif at 375 to 378 (DEAH) is the DEAH box element. In terms of domain architecture, Helicase C-terminal spans 458-603 (NVVEKMKQLY…VRSMHLNNVL (146 aa)). The segment at 478–480 (SRK) is 3' overhang DNA-binding. R562 lines the ATP pocket. The tract at residues 580-583 (RLRR) is 3' overhang DNA-binding. Residues C615, C633, C640, and C643 each contribute to the Zn(2+) site. 3 3' overhang DNA-binding regions span residues 676-678 (TLK), 687-691 (ALIKK), and 736-742 (YSVPNQA). One can recognise an HRDC domain in the interval 807 to 888 (GDVFTRCLQD…ATYWKQVDER (82 aa)). A disordered region spans residues 930–988 (GGGGCRGRGKKRAFSGFSSGRATKKPRATAPSARGKTSGRGGAKPATSLKRNMYPATSM). The Nuclear localization signal motif lies at 939–955 (KKRAFSGFSSGRATKKP).

This sequence belongs to the helicase family. RecQ subfamily. Monomer. Homodimer (via N-terminus). Homotetramer (via N-terminus); dimer of dimers. Homohexamer (via N-terminus). Self-association negatively regulates DNA unwinding amplitude and rate. Oligomer forms dissociate into monomer in presence of ATP. Component of the BTR double Holliday Junction dissolution complex composed of at least him-6, top-3, rmh-1 and rmif-2, which is involved in double strand break repair in the germline. May interact with rmh-1; the interaction is required for mutual stability and localization at nuclear foci. Forms a complex composed of cdc-48.1, him-6 and crp-1; within the complex, interacts with cdc-48.1. Zn(2+) is required as a cofactor.

The protein resides in the nucleus. It is found in the chromosome. The enzyme catalyses Couples ATP hydrolysis with the unwinding of duplex DNA by translocating in the 3'-5' direction.. It carries out the reaction ATP + H2O = ADP + phosphate + H(+). Its function is as follows. Component of the BTR double Holliday Junction dissolution complex, which is involved in homologous recombination during meiotic double strand break in the germline. Stabilizes and positively regulates the localization of the BTR double Holliday Junction dissolution complex component rmh-1 at nuclear foci during meiotic recombination. Participates in DNA replication and repair. Exhibits a magnesium-dependent ATP-dependent DNA-helicase activity that unwinds single- and double-stranded DNA in a 3'-5' direction. Negatively regulates sister chromatid exchange (SCE). In terms of biological role, ATP-dependent DNA helicase that unwinds single- and double-stranded DNA in a 3'-5' direction. Participates in DNA replication and repair. Negatively regulates sister chromatid exchange (SCE). Stimulates DNA 4-way junction branch migration and DNA Holliday junction dissolution. Binds single-stranded DNA (ssDNA), forked duplex DNA and DNA Holliday junction. This Caenorhabditis elegans protein is RecQ-like DNA helicase blm-1.